We begin with the raw amino-acid sequence, 55 residues long: Large ribosomal subunit protein eL37 (55 aa).

C20, C23, C35, and C38 together coordinate Zn(2+). The C4-type zinc finger occupies 20 to 38 (CRRCGKNSYHKRHHRCSSC).

The protein belongs to the eukaryotic ribosomal protein eL37 family. Requires Zn(2+) as cofactor.

Binds to the 23S rRNA. The polypeptide is Large ribosomal subunit protein eL37 (Cenarchaeum symbiosum (strain A)).